A 329-amino-acid chain; its full sequence is NADH-quinone oxidoreductase subunit H 2 (329 aa).

Helical transmembrane passes span G12–A32, W78–I98, V120–G140, L159–S179, G191–A211, L242–F262, L270–W290, and K309–V329.

Belongs to the complex I subunit 1 family. In terms of assembly, NDH-1 is composed of 14 different subunits. Subunits NuoA, H, J, K, L, M, N constitute the membrane sector of the complex.

It is found in the cell inner membrane. It carries out the reaction a quinone + NADH + 5 H(+)(in) = a quinol + NAD(+) + 4 H(+)(out). In terms of biological role, NDH-1 shuttles electrons from NADH, via FMN and iron-sulfur (Fe-S) centers, to quinones in the respiratory chain. The immediate electron acceptor for the enzyme in this species is believed to be ubiquinone. Couples the redox reaction to proton translocation (for every two electrons transferred, four hydrogen ions are translocated across the cytoplasmic membrane), and thus conserves the redox energy in a proton gradient. This subunit may bind ubiquinone. The protein is NADH-quinone oxidoreductase subunit H 2 of Geobacter sulfurreducens (strain ATCC 51573 / DSM 12127 / PCA).